Reading from the N-terminus, the 432-residue chain is Histidine--tRNA ligase (432 aa).

The disordered stretch occupies residues 412 to 432 (TQVPLAAFPPEEGRPTYDDYA). The segment covering 422–432 (EEGRPTYDDYA) has biased composition (basic and acidic residues).

This sequence belongs to the class-II aminoacyl-tRNA synthetase family.

It is found in the cytoplasm. It catalyses the reaction tRNA(His) + L-histidine + ATP = L-histidyl-tRNA(His) + AMP + diphosphate + H(+). The chain is Histidine--tRNA ligase from Natronomonas pharaonis (strain ATCC 35678 / DSM 2160 / CIP 103997 / JCM 8858 / NBRC 14720 / NCIMB 2260 / Gabara) (Halobacterium pharaonis).